Consider the following 314-residue polypeptide: Ribonuclease Z (314 aa).

Zn(2+)-binding residues include histidine 62, histidine 64, aspartate 66, histidine 67, histidine 139, aspartate 210, and histidine 268. Aspartate 66 serves as the catalytic Proton acceptor.

It belongs to the RNase Z family. Homodimer. It depends on Zn(2+) as a cofactor.

The enzyme catalyses Endonucleolytic cleavage of RNA, removing extra 3' nucleotides from tRNA precursor, generating 3' termini of tRNAs. A 3'-hydroxy group is left at the tRNA terminus and a 5'-phosphoryl group is left at the trailer molecule.. In terms of biological role, zinc phosphodiesterase, which displays some tRNA 3'-processing endonuclease activity. Probably involved in tRNA maturation, by removing a 3'-trailer from precursor tRNA. The sequence is that of Ribonuclease Z from Rippkaea orientalis (strain PCC 8801 / RF-1) (Cyanothece sp. (strain PCC 8801)).